The chain runs to 201 residues: Holliday junction branch migration complex subunit RuvA (201 aa).

The domain I stretch occupies residues 1–64 (MYEYIRGQFQ…EDFIGLYGFT (64 aa)). A domain II region spans residues 65-143 (TREELEMFKL…PDELTSEEGE (79 aa)). Positions 144 to 152 (LIEGINDNS) are flexible linker. The tract at residues 153–201 (DYSFNINETLSALMALGYTEKEAQKALEKVDKTLSIENMIKESLKLLMR) is domain III.

The protein belongs to the RuvA family. Homotetramer. Forms an RuvA(8)-RuvB(12)-Holliday junction (HJ) complex. HJ DNA is sandwiched between 2 RuvA tetramers; dsDNA enters through RuvA and exits via RuvB. An RuvB hexamer assembles on each DNA strand where it exits the tetramer. Each RuvB hexamer is contacted by two RuvA subunits (via domain III) on 2 adjacent RuvB subunits; this complex drives branch migration. In the full resolvosome a probable DNA-RuvA(4)-RuvB(12)-RuvC(2) complex forms which resolves the HJ.

It is found in the cytoplasm. The RuvA-RuvB-RuvC complex processes Holliday junction (HJ) DNA during genetic recombination and DNA repair, while the RuvA-RuvB complex plays an important role in the rescue of blocked DNA replication forks via replication fork reversal (RFR). RuvA specifically binds to HJ cruciform DNA, conferring on it an open structure. The RuvB hexamer acts as an ATP-dependent pump, pulling dsDNA into and through the RuvAB complex. HJ branch migration allows RuvC to scan DNA until it finds its consensus sequence, where it cleaves and resolves the cruciform DNA. This Clostridium perfringens (strain ATCC 13124 / DSM 756 / JCM 1290 / NCIMB 6125 / NCTC 8237 / Type A) protein is Holliday junction branch migration complex subunit RuvA.